The primary structure comprises 1470 residues: Collagen alpha-1(XVII) chain (1470 aa).

Disordered regions lie at residues 1-155 (MDVT…PSTR), 167-193 (KGSR…GTVE), and 422-452 (SAEN…GGAS). Topologically, residues 1–476 (MDVTKKSKRD…CGSCCSWWKW (476 aa)) are cytoplasmic. The interval 1-573 (MDVTKKSKRD…MTEQENGNLR (573 aa)) is nonhelical region (NC16). The span at 9–19 (RDGTEVTERIV) shows a compositional bias: basic and acidic residues. Low complexity predominate over residues 60 to 74 (GSSGYINSSGSIRGN). 3 stretches are compositionally biased toward polar residues: residues 75 to 96 (ASTS…SPGS), 111 to 120 (EGSSSGNSSP), and 170 to 184 (RSAS…SNTL). The segment at 146 to 231 (RLQSASPSTR…WSSTLPAGSS (86 aa)) is necessary for interaction with DST and for the recruitment of DST to hemidesmosome. The segment covering 430-452 (RGGGGGRGKGGGAGGGGGGGGAS) has biased composition (gly residues). The chain crosses the membrane as a helical; Signal-anchor for type II membrane protein span at residues 477–497 (LLGLLLTWLLLLGLLFGLIAL). Residues 498–1470 (AEEVRKLKAR…RRKRSIAIKP (973 aa)) lie on the Extracellular side of the membrane. Residue serine 551 is modified to Phosphoserine; by CK2. Disordered regions lie at residues 568–873 (ENGN…FLSS), 885–999 (GVDL…SSSG), 1159–1181 (DYRN…NAWS), 1194–1220 (TAGL…GVSA), and 1249–1298 (FIVG…TNGG). Residues 574–1456 (GSPGPKGDMG…KGEKGDKGDQ (883 aa)) form a triple-helical region region. The segment covering 597–609 (PGIPGPLGHPGPE) has biased composition (pro residues). Low complexity-rich tracts occupy residues 742 to 755 (EPGA…AGAD) and 781 to 803 (DPGK…PGRP). A compositionally biased stretch (pro residues) spans 827 to 848 (PGPPGPPGAMGPPGPPGTPGPA). Residues 850–873 (PAGLPGQQGPRGEPGLAGDSFLSS) show a composition bias toward low complexity. Composition is skewed to pro residues over residues 891-914 (PPGP…PRGP), 940-949 (PPGPPGPPGP), 982-992 (PPGPPGPPGPP), 1166-1175 (PPGPPGPPGM), 1201-1215 (PGPP…PRGP), and 1253-1262 (PPGPPGPQGP). Residue asparagine 1273 is glycosylated (N-linked (GlcNAc...) asparagine). Residues 1275-1290 (SSNSSARRGTSYSSST) show a composition bias toward low complexity. Asparagine 1395 is a glycosylation site (N-linked (GlcNAc...) asparagine). Residues 1406-1470 (TYGTIPGPPG…RRKRSIAIKP (65 aa)) are disordered. Residues 1434 to 1443 (PRGPPGPPGP) show a composition bias toward pro residues. Over residues 1446 to 1455 (NKGEKGDKGD) the composition is skewed to basic and acidic residues. The segment at 1457–1470 (VYTGRRKRSIAIKP) is nonhelical region (NC1). A compositionally biased stretch (basic residues) spans 1460 to 1470 (GRRKRSIAIKP).

Homotrimers of alpha 1(XVII)chains. Interacts (via cytoplasmic region) with ITGB4 (via cytoplasmic region). Interacts (via cytoplasmic region) with DST (via N-terminus). Interacts (via N-terminus) with PLEC. Interacts (via cytoplasmic region) with DSP. Post-translationally, the intracellular/endo domain is disulfide-linked. Prolines at the third position of the tripeptide repeating unit (G-X-Y) are hydroxylated in some or all of the chains. In terms of processing, the ectodomain is shedded from the surface of keratinocytes resulting in a 120-kDa soluble form, also named as 120 kDa linear IgA disease antigen homolog. The shedding is mediated by membrane-bound metalloproteases. This cleavage is inhibited by phosphorylation at Ser-551.

Its subcellular location is the cell junction. It is found in the hemidesmosome. The protein localises to the membrane. The protein resides in the secreted. It localises to the extracellular space. Its subcellular location is the extracellular matrix. It is found in the basement membrane. May play a role in the integrity of hemidesmosome and the attachment of basal keratinocytes to the underlying basement membrane. Its function is as follows. The 120 kDa linear IgA disease antigen homolog is an anchoring filament component involved in dermal-epidermal cohesion. The protein is Collagen alpha-1(XVII) chain (Col17a1) of Mus musculus (Mouse).